We begin with the raw amino-acid sequence, 299 residues long: Regucalcin (299 aa).

Residue Glu18 coordinates a divalent metal cation. Residues Arg101, Asn103, and Glu121 each contribute to the substrate site. Residue Lys144 is modified to N6-succinyllysine. A divalent metal cation contacts are provided by Asn154 and Asp204. Residue Asp204 is the Proton donor/acceptor of the active site. N6-succinyllysine occurs at positions 244 and 253.

It belongs to the SMP-30/CGR1 family. As to quaternary structure, monomer. Zn(2+) is required as a cofactor. Mn(2+) serves as cofactor. The cofactor is Ca(2+). It depends on Mg(2+) as a cofactor.

It localises to the cytoplasm. The catalysed reaction is D-glucono-1,5-lactone + H2O = D-gluconate + H(+). It functions in the pathway cofactor biosynthesis; L-ascorbate biosynthesis via UDP-alpha-D-glucuronate pathway; L-ascorbate from UDP-alpha-D-glucuronate: step 3/4. In terms of biological role, gluconolactonase with low activity towards other sugar lactones, including gulonolactone and galactonolactone. Catalyzes a key step in ascorbic acid (vitamin C) biosynthesis. Can also hydrolyze diisopropyl phosphorofluoridate and phenylacetate (in vitro). Calcium-binding protein. Modulates Ca(2+) signaling, and Ca(2+)-dependent cellular processes and enzyme activities. This chain is Regucalcin (RGN), found in Oryctolagus cuniculus (Rabbit).